A 748-amino-acid polypeptide reads, in one-letter code: Phytochrome-like protein Cph1 (748 aa).

The 68-residue stretch at 19 to 86 folds into the PAS domain; it reads AIHTAHLIQP…IQSRLTAGQI (68 aa). Positions 87–510 are chromophore binding domain; sequence SSLNPSKLWA…KKAIVNLILR (424 aa). The GAF domain maps to 152–320; sequence NLRDFYDVIV…VVFSNISAQE (169 aa). Cysteine 259 contributes to the a tetrapyrrole binding site. Positions 535–748 constitute a Histidine kinase domain; sequence IASHDLQEPL…TFYFSIPIGN (214 aa). Phosphohistidine; by autocatalysis is present on histidine 538.

The protein in the N-terminal section; belongs to the phytochrome family. Homodimer. Contains one covalently linked tetrapyrrole chromophore.

It carries out the reaction ATP + protein L-histidine = ADP + protein N-phospho-L-histidine.. Functionally, regulatory photoreceptor which exists in two forms that are reversibly interconvertible by light: the R form that absorbs maximally in the red region of the spectrum and the FR form that absorbs maximally in the far-red region. Also has a slight blue shift for the far-red maximum. Forms a two-component system with the Rrcp1 response regulator. This chain is Phytochrome-like protein Cph1 (cph1), found in Synechocystis sp. (strain ATCC 27184 / PCC 6803 / Kazusa).